A 363-amino-acid polypeptide reads, in one-letter code: Methylthioribose-1-phosphate isomerase (363 aa).

The Proton donor role is filled by aspartate 253.

Belongs to the eIF-2B alpha/beta/delta subunits family. MtnA subfamily.

Its subcellular location is the cytoplasm. It localises to the nucleus. The catalysed reaction is 5-(methylsulfanyl)-alpha-D-ribose 1-phosphate = 5-(methylsulfanyl)-D-ribulose 1-phosphate. It participates in amino-acid biosynthesis; L-methionine biosynthesis via salvage pathway; L-methionine from S-methyl-5-thio-alpha-D-ribose 1-phosphate: step 1/6. Functionally, catalyzes the interconversion of methylthioribose-1-phosphate (MTR-1-P) into methylthioribulose-1-phosphate (MTRu-1-P). In Drosophila grimshawi (Hawaiian fruit fly), this protein is Methylthioribose-1-phosphate isomerase.